The chain runs to 146 residues: uncharacterized protein (146 aa).

The region spanning 7–146 (LQINYKTDEL…EGHDILIWNP (140 aa)) is the N-acetyltransferase domain.

This is an uncharacterized protein from Staphylococcus epidermidis (strain ATCC 35984 / DSM 28319 / BCRC 17069 / CCUG 31568 / BM 3577 / RP62A).